Here is a 208-residue protein sequence, read N- to C-terminus: Calcyphosin-like protein (208 aa).

EF-hand domains are found at residues 39–74 (AGIK…YAVV), 75–110 (MEKE…PMSR), 111–146 (ARKE…KHHP), and 154–191 (TEEQ…VSAS). Residues aspartate 52, asparagine 54, asparagine 56, threonine 58, glutamate 63, aspartate 88, aspartate 90, serine 92, threonine 94, and glutamate 99 each contribute to the Ca(2+) site.

It localises to the cytoplasm. The polypeptide is Calcyphosin-like protein (Capsl) (Mus musculus (Mouse)).